The following is a 99-amino-acid chain: Small ribosomal subunit protein uS14 (99 aa).

The protein belongs to the universal ribosomal protein uS14 family. In terms of assembly, part of the 30S ribosomal subunit. Contacts proteins S3 and S10.

Its function is as follows. Binds 16S rRNA, required for the assembly of 30S particles and may also be responsible for determining the conformation of the 16S rRNA at the A site. The polypeptide is Small ribosomal subunit protein uS14 (Bacteroides fragilis (strain ATCC 25285 / DSM 2151 / CCUG 4856 / JCM 11019 / LMG 10263 / NCTC 9343 / Onslow / VPI 2553 / EN-2)).